We begin with the raw amino-acid sequence, 20 residues long: Unknown protein NF009 from 2D-PAGE (20 aa).

Positions 1–20 (ATSAAQGAALDESVRKVLKP) are disordered.

This is Unknown protein NF009 from 2D-PAGE from Naegleria fowleri (Brain eating amoeba).